Consider the following 1256-residue polypeptide: MRRSNKKSFDWYGTKQQFSIRKYHFGAASVLLGVSLVLGAGAQVVKADETVASSEPTIASSVAPASTEAVAEEAEKTNAENTSAVATTSTEVEKAKAVLEQVTSESPLLAGLGQKELAKTEDATLAKAIEDAQTKLAAAKAILADSEATVEQVEAQVAAVKVANEALGNELQKYTVDGLLTAALDTVAPDTTASTLKVGDGEGTLLDSTTTATPSMAEPNGAAIAPHTLRTQDGIKATSEPNWYTFESYDLYSYNKNMASSTYKGAEVDAYIRYSLDNDSSTTAVLAELVSRTTGDVLEKYTIEPGESVTFSHPTKVNANNSNITVTYDTSLASANTPGALKFSANDDVYSTIIVPAYQINTTRYVTESGKVLATYGLQTIAGQVVTPSSVRVFTGYDYVATTTKAVQGPYPKGTVYLAGTVQKDTVQYKVIREIVENDQAVLKFYYLDPTYKGEVDWRGTDTTGFIELLTTSPTTYKVGTIYDYNINSKITAPFTIDPTKNVMVFKESEQNEQGSKYRVIAQWSGDETTKGIYGKIYIATQVWTTKLGTNEWGWFDYSDDQAGIKFNNKGFWPAGVQNTLRNATPATAVETTYIYKESSKYGDVIVEYYDTDGKQIVNSVVDTPKSALGTEYNTDVDRRPASLVAADGTVYFYKEVKSDSAKTTGTVVAGTTTVKYVYEKAGSVNVNFVDINGKVIKAPVSDEKDAKPGYNYDTDLDQKLASITFEGKEYKLVPAGDYPVGKVGKGNNLIEVGNNTAKGIDPTTGKIEAGVNKEVTYVYRAVTGSVVVNYKDTEGNVIKDPETDVSDAPVGDAYTTTDKKPNEIITKDGSRYVLVPSKTDGEENGKVIEGTITVTYVYQKVANWIPEIPNVPETDRPKVPYPFDPTEPDEPIDPTTPGTNGEVPNIPYVPGYTPVDPKDNTPLKPIDPNDPGKGYVPPTPENPGVDTPIPYVPVKKVVTNHVDEEGNPIAPQEEGTKPNKSIPGYEFTGKTVTDEDGNTTHIYKKTPEVKNGTVVVNYVTEDGTVIKEPVTDTPTSPEGTPYDTTDNKPKTITFKGEEYELVRVDGTENGKVVEGETVVTYVYRKVETPAKKVVTNHVDEEGNPVAPQEEGTKPNKSIPGYEFTGKTVTDEDGNTTHIYKKTPAKKVVTNHVDEEGNPIAPQEDGTTPKRQISGYEYVRTVVDEEGNTTHIYRKLSNKPTTPEKETPAKPQAGKTASGKAQLPNTGEASSVAGALGTAMLVATLAFARKRRRNED.

The N-terminal stretch at 1–47 (MRRSNKKSFDWYGTKQQFSIRKYHFGAASVLLGVSLVLGAGAQVVKA) is a signal peptide. 2 Small repeats span residues 663-681 (KTTGTVVAGTTTVKYVYEK) and 839-861 (KTDGEENGKVIEGTITVTYVYQK). Disordered regions lie at residues 873–949 (PETD…VDTP), 967–994 (GNPIAPQEEGTKPNKSIPGYEFTGKTVT), and 1028–1049 (KEPVTDTPTSPEGTPYDTTDNK). Residues 953 to 1006 (VPVKKVVTNHVDEEGNPIAPQEEGTKPNKSIPGYEFTGKTVTDEDGNTTHIYKK) form a Large repeat. Positions 1033–1045 (DTPTSPEGTPYDT) are enriched in polar residues. The stretch at 1064–1084 (RVDGTENGKVVEGETVVTYVY) is one Small repeat. Large repeat units follow at residues 1089 to 1142 (TPAK…IYKK) and 1143 to 1195 (TPAK…IYRK). Positions 1102–1137 (EGNPVAPQEEGTKPNKSIPGYEFTGKTVTDEDGNTT) are disordered. A disordered region spans residues 1196 to 1229 (LSNKPTTPEKETPAKPQAGKTASGKAQLPNTGEA). The LPXTG sorting signal motif lies at 1223–1227 (LPNTG). Position 1226 is a pentaglycyl murein peptidoglycan amidated threonine (Thr1226). Residues 1227 to 1256 (GEASSVAGALGTAMLVATLAFARKRRRNED) constitute a propeptide, removed by sortase.

Its subcellular location is the secreted. It localises to the cell wall. This chain is Muramidase-released protein (mrp), found in Streptococcus suis.